We begin with the raw amino-acid sequence, 1457 residues long: Ras guanine nucleotide exchange factor C (1457 aa).

The stretch at 1 to 55 (MSVFTFGHGSNGALGLGKITDDTCPTPQKVNYFTEIDKRVKKVACGSYHTVFVTD) is one RCC1 1 repeat. Disordered regions lie at residues 75 to 196 (FYTS…PLLN), 209 to 264 (HYES…RINK), 282 to 313 (EQQQQPQQPQQNLKGIMNQPPLPTNDDLDEDP), and 376 to 404 (QQQLQQQQSMSSLQPSASSSSPSSSSLQT). Composition is skewed to low complexity over residues 83-121 (TTTTTTTTSSTSATTTTTNGMVNEKNNNNKNNNGEKIVN) and 134-158 (SNTTNDSTSSSSTSTSSLSSSLPPT). 2 stretches are compositionally biased toward basic and acidic residues: residues 171-188 (IKLDKGIPHHRSTRELIQ) and 209-224 (HYESNEKSKDEMKDNE). Residues 225–237 (NENEEDEDDDDDD) show a composition bias toward acidic residues. Over residues 238-249 (STIRQNEDKESS) the composition is skewed to basic and acidic residues. 2 stretches are compositionally biased toward low complexity: residues 283-292 (QQQQPQQPQQ) and 376-403 (QQQLQQQQSMSSLQPSASSSSPSSSSLQ). RCC1 repeat units follow at residues 351–401 (GGNV…SSSS), 432–483 (WGEL…CYTE), 485–549 (GKMY…VLTQ), and 590–647 (SGEV…ALVE). Residues 650-971 (PKTKLALQLV…QVLLERMNQN (322 aa)) enclose the DH domain. The segment covering 703–715 (LPPSLKGLSGGLP) has biased composition (low complexity). The disordered stretch occupies residues 703-762 (LPPSLKGLSGGLPDNANNTIKNGKDKDNHHNGDSNGHHSNGHYHGNGNNGNNSITTSNSI). Residues 724–738 (NGKDKDNHHNGDSNG) are compositionally biased toward basic and acidic residues. A compositionally biased stretch (low complexity) spans 739–762 (HHSNGHYHGNGNNGNNSITTSNSI). In terms of domain architecture, N-terminal Ras-GEF spans 989-1109 (GNPQIMGGSL…SVSQIKLQYF (121 aa)). A disordered region spans residues 1127 to 1210 (LTQNEITTPP…NNNNNNNNLT (84 aa)). Positions 1138-1211 (LQIQNNNQNN…NNNNNNNLTN (74 aa)) form a coiled coil. Residues 1142 to 1210 (NNNQNNNLEN…NNNNNNNNLT (69 aa)) are compositionally biased toward low complexity. The Ras-GEF domain maps to 1232-1454 (QPIEVAQTLT…DDKQAQKISS (223 aa)).

Functionally, promotes the exchange of Ras-bound GDP by GTP. This Dictyostelium discoideum (Social amoeba) protein is Ras guanine nucleotide exchange factor C (gefC).